Consider the following 188-residue polypeptide: Protein GrpE (188 aa).

Residues 1–16 (MEERNEQVVEEVKEAQ) are compositionally biased toward basic and acidic residues. The tract at residues 1-31 (MEERNEQVVEEVKEAQVEEAVTPENSEETVE) is disordered.

It belongs to the GrpE family. In terms of assembly, homodimer.

It is found in the cytoplasm. Participates actively in the response to hyperosmotic and heat shock by preventing the aggregation of stress-denatured proteins, in association with DnaK and GrpE. It is the nucleotide exchange factor for DnaK and may function as a thermosensor. Unfolded proteins bind initially to DnaJ; upon interaction with the DnaJ-bound protein, DnaK hydrolyzes its bound ATP, resulting in the formation of a stable complex. GrpE releases ADP from DnaK; ATP binding to DnaK triggers the release of the substrate protein, thus completing the reaction cycle. Several rounds of ATP-dependent interactions between DnaJ, DnaK and GrpE are required for fully efficient folding. This Bacillus cereus (strain G9842) protein is Protein GrpE.